The sequence spans 237 residues: Ubiquinone biosynthesis O-methyltransferase (237 aa).

Residues Arg-38, Gly-58, Asp-79, and Met-124 each contribute to the S-adenosyl-L-methionine site.

This sequence belongs to the methyltransferase superfamily. UbiG/COQ3 family.

The catalysed reaction is a 3-demethylubiquinol + S-adenosyl-L-methionine = a ubiquinol + S-adenosyl-L-homocysteine + H(+). The enzyme catalyses a 3-(all-trans-polyprenyl)benzene-1,2-diol + S-adenosyl-L-methionine = a 2-methoxy-6-(all-trans-polyprenyl)phenol + S-adenosyl-L-homocysteine + H(+). The protein operates within cofactor biosynthesis; ubiquinone biosynthesis. Its function is as follows. O-methyltransferase that catalyzes the 2 O-methylation steps in the ubiquinone biosynthetic pathway. This is Ubiquinone biosynthesis O-methyltransferase from Acinetobacter baumannii (strain SDF).